A 253-amino-acid chain; its full sequence is 5-oxoprolinase subunit A (253 aa).

It belongs to the LamB/PxpA family. Forms a complex composed of PxpA, PxpB and PxpC.

The catalysed reaction is 5-oxo-L-proline + ATP + 2 H2O = L-glutamate + ADP + phosphate + H(+). Its function is as follows. Catalyzes the cleavage of 5-oxoproline to form L-glutamate coupled to the hydrolysis of ATP to ADP and inorganic phosphate. In Bacillus cereus (strain ATCC 10987 / NRS 248), this protein is 5-oxoprolinase subunit A.